Consider the following 302-residue polypeptide: Segregation and condensation protein A (302 aa).

This sequence belongs to the ScpA family. As to quaternary structure, component of a cohesin-like complex composed of ScpA, ScpB and the Smc homodimer, in which ScpA and ScpB bind to the head domain of Smc. The presence of the three proteins is required for the association of the complex with DNA.

It is found in the cytoplasm. Its function is as follows. Participates in chromosomal partition during cell division. May act via the formation of a condensin-like complex containing Smc and ScpB that pull DNA away from mid-cell into both cell halves. This is Segregation and condensation protein A from Xylella fastidiosa (strain 9a5c).